The primary structure comprises 241 residues: Small ribosomal subunit protein uS2 (241 aa).

This sequence belongs to the universal ribosomal protein uS2 family.

The protein is Small ribosomal subunit protein uS2 of Salmonella choleraesuis (strain SC-B67).